Consider the following 329-residue polypeptide: Beta-ketoacyl-[acyl-carrier-protein] synthase III (329 aa).

Catalysis depends on residues cysteine 113 and histidine 255. The interval 256–260 (QANQR) is ACP-binding. The active site involves asparagine 285.

This sequence belongs to the thiolase-like superfamily. FabH family. Homodimer.

The protein localises to the cytoplasm. The catalysed reaction is malonyl-[ACP] + acetyl-CoA + H(+) = 3-oxobutanoyl-[ACP] + CO2 + CoA. The protein operates within lipid metabolism; fatty acid biosynthesis. Its function is as follows. Catalyzes the condensation reaction of fatty acid synthesis by the addition to an acyl acceptor of two carbons from malonyl-ACP. Catalyzes the first condensation reaction which initiates fatty acid synthesis and may therefore play a role in governing the total rate of fatty acid production. Possesses both acetoacetyl-ACP synthase and acetyl transacylase activities. Its substrate specificity determines the biosynthesis of branched-chain and/or straight-chain of fatty acids. In Chlorobium luteolum (strain DSM 273 / BCRC 81028 / 2530) (Pelodictyon luteolum), this protein is Beta-ketoacyl-[acyl-carrier-protein] synthase III.